The chain runs to 437 residues: tRNA pseudouridine synthase Pus10 (437 aa).

Positions 76 to 198 (VARDVVEHLS…GGGVDIQVNS (123 aa)) constitute a THUMP domain. The active-site Nucleophile is aspartate 253. Substrate contacts are provided by tyrosine 321 and tyrosine 394.

Belongs to the pseudouridine synthase Pus10 family.

It catalyses the reaction uridine(54) in tRNA = pseudouridine(54) in tRNA. The enzyme catalyses uridine(55) in tRNA = pseudouridine(55) in tRNA. Responsible for synthesis of pseudouridine from uracil-54 and uracil-55 in the psi GC loop of transfer RNAs. The protein is tRNA pseudouridine synthase Pus10 of Aeropyrum pernix (strain ATCC 700893 / DSM 11879 / JCM 9820 / NBRC 100138 / K1).